A 466-amino-acid polypeptide reads, in one-letter code: Pyruvate kinase (466 aa).

Residue R32 participates in substrate binding. K(+) is bound by residues N34, S36, and D66. N34–H37 provides a ligand contact to ATP. R73 contributes to the ATP binding site. Residue E219 participates in Mg(2+) binding. Substrate contacts are provided by G242, D243, and T275. Residue D243 participates in Mg(2+) binding.

This sequence belongs to the pyruvate kinase family. As to quaternary structure, homotetramer. It depends on a divalent metal cation as a cofactor.

The enzyme catalyses pyruvate + ATP = phosphoenolpyruvate + ADP + H(+). The protein operates within carbohydrate degradation; glycolysis; pyruvate from D-glyceraldehyde 3-phosphate: step 5/5. Its activity is regulated as follows. Allosterically activated by AMP and inhibited by ATP. This Thermotoga maritima (strain ATCC 43589 / DSM 3109 / JCM 10099 / NBRC 100826 / MSB8) protein is Pyruvate kinase (pyk).